A 4349-amino-acid polypeptide reads, in one-letter code: Dynein heavy chain, cytoplasmic (4349 aa).

Residues 1–1907 (MEVTSAAAPS…YIKMANAKLN (1907 aa)) are stem. Coiled coils occupy residues 459–480 (WEENVKEFTNVAREVTRRRNEK), 1178–1215 (LMKFASRLGNRMREINAEIEKARKHLESQSSDASSTAQ), 1266–1293 (SQWEALKEILEKKSRIVQDQTDALQAKI), 1334–1354 (ESRISKLQDDAQMVAKAKEAL), 1560–1577 (YKEFEEEAVAWEDKLNRV), and 1640–1670 (NIPNVQKSLERLAEMLNKIQKALGEYLEKER). AAA stretches follow at residues 1908–2133 (YGFE…VLVS), 2201–2459 (NAIR…FTTA), 2565–2814 (EVNT…WVRG), and 2908–3177 (TFCE…QGKV). 1946–1953 (GPAGTGKT) contacts ATP. Residues 2194–2217 (ANLEALENAIRELAAERHLVVNEL) adopt a coiled-coil conformation. Residues 2239–2246 (GNSGSGKS), 2604–2611 (GPPGSGKT), and 2946–2953 (GVSGSGKT) each bind ATP. Coiled coils occupy residues 3186-3294 (LDFV…LAKA), 3420-3477 (GPLK…EMSR), and 3774-3807 (DNVIETLETLKTEAAEISAKMSNTEGVMAEVEEI). Positions 3186 to 3477 (LDFVTQYIKL…TQAIKAEMSR (292 aa)) are stalk. AAA stretches follow at residues 3563–3792 (LSTA…EISA) and 4001–4213 (AERF…IVDT).

Belongs to the dynein heavy chain family. As to quaternary structure, consists of at least two heavy chains and a number of intermediate and light chains.

It is found in the cytoplasm. It localises to the cytoskeleton. In terms of biological role, cytoplasmic dynein acts as a motor for the intracellular retrograde motility of vesicles and organelles along microtubules. Dynein has ATPase activity; the force-producing power stroke is thought to occur on release of ADP. This Fusarium vanettenii (Neocosmospora pisi) protein is Dynein heavy chain, cytoplasmic (DHC1).